The sequence spans 133 residues: Small ribosomal subunit protein bS18 (133 aa).

Residues 1–63 (MARPDMGGPK…GDEGGGRRGF (63 aa)) are disordered. Gly residues predominate over residues 9 to 39 (PKTGGFGGPRSGGFGGGGGGGFGGGGFGGGR). A compositionally biased stretch (basic and acidic residues) spans 40-59 (GGDRGDRGDRDDRGGDEGGG).

The protein belongs to the bacterial ribosomal protein bS18 family. In terms of assembly, part of the 30S ribosomal subunit. Forms a tight heterodimer with protein bS6.

In terms of biological role, binds as a heterodimer with protein bS6 to the central domain of the 16S rRNA, where it helps stabilize the platform of the 30S subunit. The polypeptide is Small ribosomal subunit protein bS18 (Anaeromyxobacter dehalogenans (strain 2CP-1 / ATCC BAA-258)).